Reading from the N-terminus, the 609-residue chain is UvrABC system protein C (609 aa).

Residues 16–94 form the GIY-YIG domain; it reads SSPGVYRMYD…IKQYMPKYNV (79 aa). A UVR domain is found at 203–238; it reads QQVMSVLVQKMEQASSDMRYEQAALYRDQITALRRV.

The protein belongs to the UvrC family. As to quaternary structure, interacts with UvrB in an incision complex.

The protein localises to the cytoplasm. Functionally, the UvrABC repair system catalyzes the recognition and processing of DNA lesions. UvrC both incises the 5' and 3' sides of the lesion. The N-terminal half is responsible for the 3' incision and the C-terminal half is responsible for the 5' incision. This chain is UvrABC system protein C, found in Shewanella pealeana (strain ATCC 700345 / ANG-SQ1).